Consider the following 489-residue polypeptide: Threonine/serine exporter (489 aa).

10 consecutive transmembrane segments (helical) span residues 151–171 (GFPV…VLLG), 174–194 (WQVS…TSFL), 206–226 (VVGG…ALQF), 233–253 (SQII…VQSL), 268–288 (FFET…GIQL), 314–334 (IIAG…EWSS), 335–355 (VIIA…FVVY), 356–376 (LGPV…GGLL), 381–401 (LIPP…GLAI), and 420–440 (IAVA…GEWI). The tract at residues 464-489 (FQEEAEQNQRRQRKRPKTNQRFGNKR) is disordered. The segment covering 473–489 (RRQRKRPKTNQRFGNKR) has biased composition (basic residues).

The protein belongs to the ThrE exporter (TC 2.A.79) family.

The protein localises to the cell membrane. The enzyme catalyses L-threonine(in) + H(+)(out) = L-threonine(out) + H(+)(in). With respect to regulation, transport is inhibited by the proton ionophore carbonyl cyanide m-chlorophenylhydrazone (CCCP). In terms of biological role, catalyzes the export of L-threonine and L-serine from the cell to the extracellular environment. Export is dependent on the proton motive force. The polypeptide is Threonine/serine exporter (Corynebacterium glutamicum (Brevibacterium saccharolyticum)).